We begin with the raw amino-acid sequence, 387 residues long: Limonene 1,2-monooxygenase (387 aa).

This sequence belongs to the bacterial luciferase oxidoreductase family. The cofactor is FAD.

It carries out the reaction (4S)-limonene + NADPH + O2 + H(+) = limonene 1,2-epoxide + NADP(+) + H2O. The enzyme catalyses (4S)-limonene + NADH + O2 + H(+) = limonene 1,2-epoxide + NAD(+) + H2O. The catalysed reaction is (4R)-limonene + NADH + O2 + H(+) = limonene 1,2-epoxide + NAD(+) + H2O. It catalyses the reaction (4R)-limonene + NADPH + O2 + H(+) = limonene 1,2-epoxide + NADP(+) + H2O. It participates in terpene metabolism; (4R)-limonene degradation; (1S,4R)-1-hydroxylimonen-2-one from (4R)-limonene: step 1/3. In terms of biological role, acts on both enantiomers of limonene by their NAD-dependent epoxidation at the 1,2 double bond forming limonene-1,2-epoxide. The chain is Limonene 1,2-monooxygenase (limB) from Rhodococcus erythropolis (Arthrobacter picolinophilus).